We begin with the raw amino-acid sequence, 156 residues long: Small ribosomal subunit protein uS7c (156 aa).

The protein belongs to the universal ribosomal protein uS7 family. Part of the 30S ribosomal subunit.

It localises to the plastid. It is found in the chloroplast. Its function is as follows. One of the primary rRNA binding proteins, it binds directly to 16S rRNA where it nucleates assembly of the head domain of the 30S subunit. The chain is Small ribosomal subunit protein uS7c (rps7) from Stangeria eriopus (Natal grass cycad).